The primary structure comprises 84 residues: Small ribosomal subunit protein bS16 (84 aa).

It belongs to the bacterial ribosomal protein bS16 family.

This Paraburkholderia phymatum (strain DSM 17167 / CIP 108236 / LMG 21445 / STM815) (Burkholderia phymatum) protein is Small ribosomal subunit protein bS16.